The chain runs to 361 residues: Putative agmatine deiminase (361 aa).

The Amidino-cysteine intermediate role is filled by C354.

Belongs to the agmatine deiminase family.

It catalyses the reaction agmatine + H2O = N-carbamoylputrescine + NH4(+). This chain is Putative agmatine deiminase, found in Streptococcus pneumoniae (strain Hungary19A-6).